Consider the following 262-residue polypeptide: Cytochrome c oxidase subunit 3 (262 aa).

Helical transmembrane passes span 39 to 59 (YDISLFLLGNIITILTVYQWW), 83 to 103 (GMILFILSEVLFFVSFFWAFF), 120 to 140 (MGIISFNPFQIPLLNTAILLA), 163 to 183 (GLFFTVLLGIYFTILQAYEYI), 201 to 221 (ATGFHGVHVLIGTTFLLVCLL), and 240 to 260 (AWYWHFVDVVWLFLYITIYWW).

The protein belongs to the cytochrome c oxidase subunit 3 family. In terms of assembly, component of the cytochrome c oxidase (complex IV, CIV), a multisubunit enzyme composed of a catalytic core of 3 subunits and several supernumerary subunits. The complex exists as a monomer or a dimer and forms supercomplexes (SCs) in the inner mitochondrial membrane with ubiquinol-cytochrome c oxidoreductase (cytochrome b-c1 complex, complex III, CIII).

The protein localises to the mitochondrion inner membrane. The catalysed reaction is 4 Fe(II)-[cytochrome c] + O2 + 8 H(+)(in) = 4 Fe(III)-[cytochrome c] + 2 H2O + 4 H(+)(out). In terms of biological role, component of the cytochrome c oxidase, the last enzyme in the mitochondrial electron transport chain which drives oxidative phosphorylation. The respiratory chain contains 3 multisubunit complexes succinate dehydrogenase (complex II, CII), ubiquinol-cytochrome c oxidoreductase (cytochrome b-c1 complex, complex III, CIII) and cytochrome c oxidase (complex IV, CIV), that cooperate to transfer electrons derived from NADH and succinate to molecular oxygen, creating an electrochemical gradient over the inner membrane that drives transmembrane transport and the ATP synthase. Cytochrome c oxidase is the component of the respiratory chain that catalyzes the reduction of oxygen to water. Electrons originating from reduced cytochrome c in the intermembrane space (IMS) are transferred via the dinuclear copper A center (CU(A)) of subunit 2 and heme A of subunit 1 to the active site in subunit 1, a binuclear center (BNC) formed by heme A3 and copper B (CU(B)). The BNC reduces molecular oxygen to 2 water molecules using 4 electrons from cytochrome c in the IMS and 4 protons from the mitochondrial matrix. The protein is Cytochrome c oxidase subunit 3 (mt:CoIII) of Drosophila yakuba (Fruit fly).